Consider the following 367-residue polypeptide: Uracil nucleotide/cysteinyl leukotriene receptor (367 aa).

A disordered region spans residues 1–28; sequence MSKRSWWAGSRKPPREMLKLSGSDSSQS. At 1–64 the chain is on the extracellular side; the sequence is MSKRSWWAGS…TPLENMLFAS (64 aa). N-linked (GlcNAc...) asparagine glycosylation is present at Asn42. The chain crosses the membrane as a helical span at residues 65 to 85; sequence FYLLDFILALVGNTLALWLFI. Residues 86–92 lie on the Cytoplasmic side of the membrane; it reads RDHKSGT. A helical transmembrane segment spans residues 93–113; sequence PANVFLMHLAVADLSCVLVLP. The Extracellular segment spans residues 114–133; the sequence is TRLVYHFSGNHWPFGEIACR. A disulfide bond links Cys132 and Cys209. Residues 134 to 154 form a helical membrane-spanning segment; the sequence is LTGFLFYLNMYASIYFLTCIS. The Cytoplasmic portion of the chain corresponds to 155–175; it reads ADRFLAIVHPVKSLKLRRPLY. A helical transmembrane segment spans residues 176-196; sequence AHLACAFLWVVVAVAMAPLLV. Topologically, residues 197–223 are extracellular; the sequence is SPQTVQTNHTVVCLQLYREKASHHALV. Asn204 is a glycosylation site (N-linked (GlcNAc...) asparagine). A helical transmembrane segment spans residues 224 to 244; sequence SLAVAFTFPFITTVTCYLLII. Residues 245-260 lie on the Cytoplasmic side of the membrane; sequence RSLRQGLRVEKRLKTK. The helical transmembrane segment at 261–281 threads the bilayer; the sequence is AVRMIAIVLAIFLVCFVPYHV. Asn282 carries N-linked (GlcNAc...) asparagine glycosylation. The Extracellular segment spans residues 282–308; the sequence is NRSVYVLHYRSHGASCATQRILALANR. The chain crosses the membrane as a helical span at residues 309 to 329; sequence ITSCLTSLNGALDPIMYFFVA. The Cytoplasmic segment spans residues 330–367; the sequence is EKFRHALCNLLCGKRLKGPPPSFEGKTNESSLSAKSEL.

The protein belongs to the G-protein coupled receptor 1 family. Expressed in brain, kidney, heart and umbilical vein endothelial cells. Highest level in brain.

Its subcellular location is the cell membrane. In terms of biological role, dual specificity receptor for uracil nucleotides and cysteinyl leukotrienes (CysLTs). Signals through G(i) and inhibition of adenylyl cyclase. May mediate brain damage by nucleotides and CysLTs following ischemia. The sequence is that of Uracil nucleotide/cysteinyl leukotriene receptor (GPR17) from Homo sapiens (Human).